Consider the following 636-residue polypeptide: Threonine--tRNA ligase (636 aa).

The TGS domain occupies 1-61 (MPVITLPDGS…TQDASLQLIT (61 aa)). The catalytic stretch occupies residues 243-534 (DHRKIGKTLD…LIEEFTGKFP (292 aa)). Zn(2+) contacts are provided by cysteine 334, histidine 385, and histidine 511.

Belongs to the class-II aminoacyl-tRNA synthetase family. In terms of assembly, homodimer. Requires Zn(2+) as cofactor.

It localises to the cytoplasm. The enzyme catalyses tRNA(Thr) + L-threonine + ATP = L-threonyl-tRNA(Thr) + AMP + diphosphate + H(+). Functionally, catalyzes the attachment of threonine to tRNA(Thr) in a two-step reaction: L-threonine is first activated by ATP to form Thr-AMP and then transferred to the acceptor end of tRNA(Thr). Also edits incorrectly charged L-seryl-tRNA(Thr). The chain is Threonine--tRNA ligase from Colwellia psychrerythraea (strain 34H / ATCC BAA-681) (Vibrio psychroerythus).